Consider the following 24-residue polypeptide: FQPSLVLDMAQVLLDNYTFPENLM.

The protein resides in the secreted. It is found in the extracellular space. Its subcellular location is the extracellular matrix. It localises to the interphotoreceptor matrix. In terms of biological role, IRBP shuttles 11-cis and all trans retinoids between the retinol isomerase in the pigment epithelium and the visual pigments in the photoreceptor cells of the retina. This is Retinol-binding protein 3 (RBP3) from Ovis aries (Sheep).